The chain runs to 396 residues: NADH-quinone oxidoreductase subunit D 1 (396 aa).

It belongs to the complex I 49 kDa subunit family. As to quaternary structure, NDH-1 is composed of 14 different subunits. Subunits NuoB, C, D, E, F, and G constitute the peripheral sector of the complex.

It localises to the cell inner membrane. The catalysed reaction is a quinone + NADH + 5 H(+)(in) = a quinol + NAD(+) + 4 H(+)(out). Its function is as follows. NDH-1 shuttles electrons from NADH, via FMN and iron-sulfur (Fe-S) centers, to quinones in the respiratory chain. The immediate electron acceptor for the enzyme in this species is believed to be ubiquinone. Couples the redox reaction to proton translocation (for every two electrons transferred, four hydrogen ions are translocated across the cytoplasmic membrane), and thus conserves the redox energy in a proton gradient. This Rhizobium etli (strain ATCC 51251 / DSM 11541 / JCM 21823 / NBRC 15573 / CFN 42) protein is NADH-quinone oxidoreductase subunit D 1.